Here is a 369-residue protein sequence, read N- to C-terminus: MHGESPIKRRESRKIWVGNVPVGGDAPIAVQSMTNTDTNDVAATVAQIQRLVDAGVDIVRVSVPDMDAAEAFGKIKQLVSVPLVADIHFDYKIALRVAELGVDCLRINPGNIGREDRVRAVVDAARDRGIPIRIGVNAGSLEKDLQKKYGEPTPAALVESALRHVEHLDRLDFQDFKVSVKASDVFMAVEAYRLLAKQIVQPLHLGITEAGGLRSGTVKSAVGLGMLLAEGIGDTIRISLAADPVEEVKVGYDILKSLHLRSRGINFIACPSCSRQNFDVVKTMNELEGRLEDLLVPLDVAVIGCVVNGPGEAKEAHVGLTGGTPNLIYIDGKPAQKLTNDNLVDELEKLIRQKAAEKVEADAALIVRG.

[4Fe-4S] cluster contacts are provided by cysteine 270, cysteine 273, cysteine 305, and glutamate 312.

Belongs to the IspG family. Requires [4Fe-4S] cluster as cofactor.

The catalysed reaction is (2E)-4-hydroxy-3-methylbut-2-enyl diphosphate + oxidized [flavodoxin] + H2O + 2 H(+) = 2-C-methyl-D-erythritol 2,4-cyclic diphosphate + reduced [flavodoxin]. Its pathway is isoprenoid biosynthesis; isopentenyl diphosphate biosynthesis via DXP pathway; isopentenyl diphosphate from 1-deoxy-D-xylulose 5-phosphate: step 5/6. Functionally, converts 2C-methyl-D-erythritol 2,4-cyclodiphosphate (ME-2,4cPP) into 1-hydroxy-2-methyl-2-(E)-butenyl 4-diphosphate. The chain is 4-hydroxy-3-methylbut-2-en-1-yl diphosphate synthase (flavodoxin) from Pseudomonas putida (strain GB-1).